The following is a 452-amino-acid chain: Chromosomal replication initiator protein DnaA (452 aa).

A domain I, interacts with DnaA modulators region spans residues 1–84 (MTENEQIFWN…SIEYVFEETQ (84 aa)). The interval 84–110 (QSTSNSPQISQNKTAELATETLPFVQN) is domain II. A domain III, AAA+ region region spans residues 111 to 329 (DLNPKYSFDN…GALKDISLVA (219 aa)). ATP is bound by residues G155, G157, K158, and T159. Residues 330–452 (NFKKLDVITV…EMETIKNKIK (123 aa)) form a domain IV, binds dsDNA region.

This sequence belongs to the DnaA family. In terms of assembly, oligomerizes as a right-handed, spiral filament on DNA at oriC.

The protein resides in the cytoplasm. In terms of biological role, plays an essential role in the initiation and regulation of chromosomal replication. ATP-DnaA binds to the origin of replication (oriC) to initiate formation of the DNA replication initiation complex once per cell cycle. Binds the DnaA box (a 9 base pair repeat at the origin) and separates the double-stranded (ds)DNA. Forms a right-handed helical filament on oriC DNA; dsDNA binds to the exterior of the filament while single-stranded (ss)DNA is stabiized in the filament's interior. The ATP-DnaA-oriC complex binds and stabilizes one strand of the AT-rich DNA unwinding element (DUE), permitting loading of DNA polymerase. After initiation quickly degrades to an ADP-DnaA complex that is not apt for DNA replication. Binds acidic phospholipids. This chain is Chromosomal replication initiator protein DnaA, found in Streptococcus mutans serotype c (strain ATCC 700610 / UA159).